The sequence spans 309 residues: Ribosomal RNA large subunit methyltransferase F (309 aa).

The protein belongs to the methyltransferase superfamily. METTL16/RlmF family.

Its subcellular location is the cytoplasm. The enzyme catalyses adenosine(1618) in 23S rRNA + S-adenosyl-L-methionine = N(6)-methyladenosine(1618) in 23S rRNA + S-adenosyl-L-homocysteine + H(+). Its function is as follows. Specifically methylates the adenine in position 1618 of 23S rRNA. The sequence is that of Ribosomal RNA large subunit methyltransferase F from Cronobacter sakazakii (strain ATCC BAA-894) (Enterobacter sakazakii).